We begin with the raw amino-acid sequence, 485 residues long: MRHIFSLLSIVCLMVKHGACLTLHQRDVPAVVSLDIKRSIVSDPVVRDRVRRKRDKTIGQTLDNAETLYFCNVTLGTPGQALRLVLDTGSSDLWCNAANSTLCSDSNDSCNISGSYDPSSSSTYAYVSSDFNISYADGTGAVGDYATDILHIGGSTLRNLQFGIGYSSTSSEGVLGIGYPSNEVQVGQYGKDTYPNLPRAMVDQGLINSNAYSLWLNDLESNTGSILFGGVNTGKYLGELQTLPIQKVNGRYSEFVIALTGVAFDSESHHKTYSSDALPAAVLLDSGSSLTYLPDSIVENIYRDLNVAYEPSSGVGYLPCKLAGNNINITYTFSSPNITVMIDELLLDAGDLRFRDGARACIFGIVPAGDSTAVLGDTFLRSAYVVYDIANNEISIANTNFNSTEDNILEIGVGPDSVPSATQVSHPVTSVVADGSGARIGAPTGASSTTVPSISSAGALSAGVARADKQYLAIALIAVWFVLGL.

Residues 1–20 (MRHIFSLLSIVCLMVKHGAC) form the signal peptide. Residues 69–397 (YFCNVTLGTP…DIANNEISIA (329 aa)) form the Peptidase A1 domain. Asn-72 carries N-linked (GlcNAc...) asparagine glycosylation. Asp-87 is a catalytic residue. Residues Asn-99, Asn-107, Asn-111, and Asn-132 are each glycosylated (N-linked (GlcNAc...) asparagine). Asp-285 is a catalytic residue. Asn-328, Asn-337, and Asn-402 each carry an N-linked (GlcNAc...) asparagine glycan. A lipid anchor (GPI-anchor amidated serine) is attached at Ser-461. Positions 462 to 485 (AGVARADKQYLAIALIAVWFVLGL) are cleaved as a propeptide — removed in mature form.

Belongs to the peptidase A1 family.

It localises to the cell membrane. Probable GPI-anchored aspartic-type endopeptidase which contributes to virulence. The sequence is that of Probable aspartic-type endopeptidase opsB (opsB) from Aspergillus fumigatus (strain ATCC MYA-4609 / CBS 101355 / FGSC A1100 / Af293) (Neosartorya fumigata).